A 216-amino-acid polypeptide reads, in one-letter code: Alanyl-tRNA editing protein AlaX-M (216 aa).

Zn(2+) contacts are provided by histidine 99, histidine 103, and cysteine 182.

This sequence belongs to the class-II aminoacyl-tRNA synthetase family. Editing domain AlaX-M subfamily. In terms of assembly, monomer. Zn(2+) serves as cofactor.

The protein resides in the cytoplasm. In terms of biological role, functions in trans to edit the amino acid moiety from mischarged charged Gly-tRNA(Ala) and Ser-tRNA(Ala). This chain is Alanyl-tRNA editing protein AlaX-M (alaXM), found in Pyrococcus horikoshii (strain ATCC 700860 / DSM 12428 / JCM 9974 / NBRC 100139 / OT-3).